The primary structure comprises 54 residues: MKLLTHVCHYCSFSFFTRKFDVFGAITKKDTPVVFCPTCGNQSLSVSHIEEEIR.

This sequence belongs to the phi29likevirus gp16.6 family.

In Bacillus phage phi29 (Bacteriophage phi-29), this protein is Gene product 16.6 (16.6).